The primary structure comprises 795 residues: Protocadherin beta-5 (795 aa).

The signal sequence occupies residues methionine 1 to alanine 30. Over valine 31 to leucine 689 the chain is Extracellular. 5 consecutive Cadherin domains span residues isoleucine 35 to phenylalanine 133, methionine 138 to phenylalanine 242, tyrosine 247 to leucine 346, leucine 351 to phenylalanine 450, and tyrosine 455 to valine 560. An N-linked (GlcNAc...) asparagine glycan is attached at asparagine 169. Residue lysine 296 is modified to N6-acetyllysine. N-linked (GlcNAc...) asparagine glycans are attached at residues asparagine 417 and asparagine 435. A glycan (N-linked (GlcNAc...) asparagine) is linked at asparagine 566. Positions glycine 567–leucine 670 constitute a Cadherin 6 domain. Residues valine 690–valine 710 form a helical membrane-spanning segment. The Cytoplasmic segment spans residues arginine 711–asparagine 795.

It is found in the cell membrane. Potential calcium-dependent cell-adhesion protein. May be involved in the establishment and maintenance of specific neuronal connections in the brain. This Homo sapiens (Human) protein is Protocadherin beta-5 (PCDHB5).